The following is a 305-amino-acid chain: NAD kinase (305 aa).

Asp-82 (proton acceptor) is an active-site residue. NAD(+) contacts are provided by residues 82–83 (DG), 156–157 (ND), Arg-184, Asp-186, 197–202 (TAYALS), Ala-221, and Gln-255.

It belongs to the NAD kinase family. It depends on a divalent metal cation as a cofactor.

The protein resides in the cytoplasm. It carries out the reaction NAD(+) + ATP = ADP + NADP(+) + H(+). Its function is as follows. Involved in the regulation of the intracellular balance of NAD and NADP, and is a key enzyme in the biosynthesis of NADP. Catalyzes specifically the phosphorylation on 2'-hydroxyl of the adenosine moiety of NAD to yield NADP. The protein is NAD kinase of Cupriavidus pinatubonensis (strain JMP 134 / LMG 1197) (Cupriavidus necator (strain JMP 134)).